Consider the following 246-residue polypeptide: Probable transcriptional regulatory protein YebC (246 aa).

The tract at residues 1–20 (MAGHSKWANTRHRKAAQDAK) is disordered.

The protein belongs to the TACO1 family.

Its subcellular location is the cytoplasm. This Salmonella choleraesuis (strain SC-B67) protein is Probable transcriptional regulatory protein YebC.